The sequence spans 763 residues: MRPTPLLRLALFLVLPSSLGGERCPSPPCECRQEDDFRVTCKDIQSIPSLPPSTQTLKFIETHLKTIPSRAFSNLPNISRIYLSIDATLQQLESHSFYNLSKVTHIEIRNTRSLTYIDSGALKELPLLKFLGIFNTGLRVFPDLTKIYSTDVFFILEITDNPYMTSIPANAFQGLCNETLTLKLYNNGFTSIQGHAFNGTKLDAVYLNKNKYLTVIGQDAFAGVYSGPTLLDISYTSVTALPSKGLEHLKELIARNTWTLRKLPLSLSFLHLTRADLSYPSHCCAFKNQKKIRGILQSLMCNESSIRGLRQRKSASALNGPFYQEYEDLGDGSAGYKENSKFQDTQSNSHYYVFFEEQEDEIIGFGQQLKNPQEETLQAFDSHYDYTVCGGSEDMVCTPKSDEFNPCEDIMGYKFLRIVVWFVSLLALLGNVFVLVILLTSHYKLTVPRFLMCNLAFADFCMGLYLLLIASVDLYTQSEYYNHAIDWQTGPGCNTAGFFTVFASELSVYTLTVITLERWHAITFAMRLDRKIRLWHAYVIMLGGWVCCFLLALLPLVGISSYAKVSICLPMDTETPLALAYIILVLLLNIIAFIIVCACYVKIYITVRNPHYNPGDKDTRIAKRMAVLIFTDFMCMAPISFYALSALMNKPLITVTNSKILLVLFYPLNSCANPFLYAIFTKAFQRDVFMLLSKFGICKRQAQAYRGQRVSPKNSTGIRVQKVPPDVRQSLPNVQDDYELLENSHLTPKQQDQTSKEYKRTVL.

The N-terminal stretch at 1 to 21 (MRPTPLLRLALFLVLPSSLGG) is a signal peptide. At 22 to 412 (ERCPSPPCEC…EFNPCEDIMG (391 aa)) the chain is on the extracellular side. Cys-31 and Cys-41 are joined by a disulfide. The LRR 1 repeat unit spans residues 51 to 74 (PPSTQTLKFIETHLKTIPSRAFSN). 2 N-linked (GlcNAc...) asparagine glycosylation sites follow: Asn-77 and Asn-99. 5 LRR repeats span residues 125-150 (LPLL…IYST), 151-174 (DVFF…AFQG), 176-199 (CNET…AFNG), 201-223 (KLDA…AFAG), and 225-248 (YSGP…GLEH). N-linked (GlcNAc...) asparagine glycans are attached at residues Asn-177 and Asn-198. A glycan (N-linked (GlcNAc...) asparagine) is linked at Asn-302. Tyr-384 is subject to Sulfotyrosine. A helical transmembrane segment spans residues 413-440 (YKFLRIVVWFVSLLALLGNVFVLVILLT). The Cytoplasmic segment spans residues 441–449 (SHYKLTVPR). Residues 450 to 472 (FLMCNLAFADFCMGLYLLLIASV) form a helical membrane-spanning segment. Residues 473 to 493 (DLYTQSEYYNHAIDWQTGPGC) are Extracellular-facing. Cysteines 493 and 568 form a disulfide. A helical membrane pass occupies residues 494-516 (NTAGFFTVFASELSVYTLTVITL). Topologically, residues 517–536 (ERWHAITFAMRLDRKIRLWH) are cytoplasmic. A helical transmembrane segment spans residues 537-559 (AYVIMLGGWVCCFLLALLPLVGI). Topologically, residues 560-579 (SSYAKVSICLPMDTETPLAL) are extracellular. Residues 580 to 601 (AYIILVLLLNIIAFIIVCACYV) form a helical membrane-spanning segment. Topologically, residues 602 to 624 (KIYITVRNPHYNPGDKDTRIAKR) are cytoplasmic. A helical transmembrane segment spans residues 625 to 648 (MAVLIFTDFMCMAPISFYALSALM). Residues 649-659 (NKPLITVTNSK) lie on the Extracellular side of the membrane. A helical transmembrane segment spans residues 660-681 (ILLVLFYPLNSCANPFLYAIFT). Topologically, residues 682-763 (KAFQRDVFML…TSKEYKRTVL (82 aa)) are cytoplasmic. A disordered region spans residues 742 to 763 (ENSHLTPKQQDQTSKEYKRTVL). Residues 744-753 (SHLTPKQQDQ) show a composition bias toward polar residues. Residues 754 to 763 (TSKEYKRTVL) are compositionally biased toward basic and acidic residues. The short motif at 761–763 (TVL) is the PDZ-binding element.

Belongs to the G-protein coupled receptor 1 family. FSH/LSH/TSH subfamily. In terms of assembly, interacts with heterodimer GPHA2:GPHB5; this interaction stimulates cAMP production. Interacts (via the PDZ-binding motif) with SCRIB; regulates TSHR trafficking and function. Glycosylated. In terms of processing, sulfated. Sulfation on Tyr-384 plays a role in thyrotropin receptor binding and activation.

It is found in the cell membrane. It localises to the basolateral cell membrane. Receptor for the thyroid-stimulating hormone (TSH) or thyrotropin. Also acts as a receptor for the heterodimeric glycoprotein hormone (GPHA2:GPHB5) or thyrostimulin. The activity of this receptor is mediated by G proteins which activate adenylate cyclase. Plays a central role in controlling thyroid cell metabolism. The protein is Thyrotropin receptor (TSHR) of Bos taurus (Bovine).